The following is a 587-amino-acid chain: Arginine--tRNA ligase (587 aa).

The 'HIGH' region signature appears at 127-137 (PNLAKEMHVGH).

This sequence belongs to the class-I aminoacyl-tRNA synthetase family. In terms of assembly, monomer.

It is found in the cytoplasm. The catalysed reaction is tRNA(Arg) + L-arginine + ATP = L-arginyl-tRNA(Arg) + AMP + diphosphate. The polypeptide is Arginine--tRNA ligase (Pseudomonas aeruginosa (strain LESB58)).